Consider the following 521-residue polypeptide: uncharacterized protein (521 aa).

Positions 1–22 are cleaved as a signal peptide; it reads MGFKLKGFGFLTLFASQAFLTA. C23 is lipidated: N-palmitoyl cysteine. The S-diacylglycerol cysteine moiety is linked to residue C23.

This sequence belongs to the MG067/MG068/MG395 family.

The protein localises to the cell membrane. This is an uncharacterized protein from Mycoplasma pneumoniae (strain ATCC 29342 / M129 / Subtype 1) (Mycoplasmoides pneumoniae).